A 134-amino-acid chain; its full sequence is ATP synthase epsilon chain, chloroplastic (134 aa).

Belongs to the ATPase epsilon chain family. As to quaternary structure, F-type ATPases have 2 components, CF(1) - the catalytic core - and CF(0) - the membrane proton channel. CF(1) has five subunits: alpha(3), beta(3), gamma(1), delta(1), epsilon(1). CF(0) has three main subunits: a, b and c.

The protein resides in the plastid. It localises to the chloroplast thylakoid membrane. Its function is as follows. Produces ATP from ADP in the presence of a proton gradient across the membrane. The protein is ATP synthase epsilon chain, chloroplastic of Pelargonium hortorum (Common geranium).